The sequence spans 360 residues: LETM1 domain-containing protein 1 (360 aa).

The required and sufficient for mitochondrial import stretch occupies residues 1–110 (MALSRVCWAR…KKARRIKTNM (110 aa)). The Cytoplasmic portion of the chain corresponds to 1–137 (MALSRVCWAR…LRQFRRDVTK (137 aa)). Residues 138 to 158 (CLFLGILSIPPFANYLVFLLM) traverse the membrane as a helical segment. Topologically, residues 159–360 (YLFPRQLLIR…LSINYVGSRR (202 aa)) are mitochondrial intermembrane. Positions 186-360 (LRKQSHPEIL…LSINYVGSRR (175 aa)) constitute a Letm1 RBD domain.

As to quaternary structure, interacts with BRI3BP. Interacts (via C-terminal) with SMARCA4; the interaction regulates transcriptional expression of thermogenic genes in brown adipose tissue.

The protein localises to the mitochondrion outer membrane. It is found in the nucleus. Its subcellular location is the mitochondrion inner membrane. Functionally, plays an essential role for mitochondrial structure and function, as well as thermogenesis of brown adipocytes. In brown adipose tissue also localizes in the nucleus where it interacts with the chromatin remodeler SMARCA4 to regulate thermogenic genes expression, such as UCP1. May regulate phagocytosis and inflammatory responses to lipopolysaccharide in macrophages. Involved in tumorigenesis and may function as a negative regulator of the p53/TP53. This chain is LETM1 domain-containing protein 1, found in Bos taurus (Bovine).